We begin with the raw amino-acid sequence, 205 residues long: Probable GTP-binding protein EngB (205 aa).

The EngB-type G domain occupies 29 to 203 (QGAEIAFIGR…KAVLSQWFSS (175 aa)). Residues 37–44 (GRSNAGKS), 64–68 (GRTQM), 82–85 (DLPG), 149–152 (TKSD), and 182–184 (FSS) each bind GTP. The Mg(2+) site is built by Ser-44 and Thr-66.

The protein belongs to the TRAFAC class TrmE-Era-EngA-EngB-Septin-like GTPase superfamily. EngB GTPase family. The cofactor is Mg(2+).

In terms of biological role, necessary for normal cell division and for the maintenance of normal septation. In Coxiella burnetii (strain CbuK_Q154) (Coxiella burnetii (strain Q154)), this protein is Probable GTP-binding protein EngB.